Consider the following 182-residue polypeptide: Large ribosomal subunit protein uL5 (182 aa).

It belongs to the universal ribosomal protein uL5 family. As to quaternary structure, part of the 50S ribosomal subunit; part of the 5S rRNA/L5/L18/L25 subcomplex. Contacts the 5S rRNA and the P site tRNA. Forms a bridge to the 30S subunit in the 70S ribosome.

Functionally, this is one of the proteins that bind and probably mediate the attachment of the 5S RNA into the large ribosomal subunit, where it forms part of the central protuberance. In the 70S ribosome it contacts protein S13 of the 30S subunit (bridge B1b), connecting the 2 subunits; this bridge is implicated in subunit movement. Contacts the P site tRNA; the 5S rRNA and some of its associated proteins might help stabilize positioning of ribosome-bound tRNAs. This is Large ribosomal subunit protein uL5 from Leptospira interrogans serogroup Icterohaemorrhagiae serovar copenhageni (strain Fiocruz L1-130).